Consider the following 91-residue polypeptide: MPRSLKKGPFIDLHLLKKVEVAVEKNDRKPIKTWSRRSMILPHMVGLTIAVHNGRQHVPVLVNEDMVGHKLGEFAATRTYRGHAADKKAKR.

The protein belongs to the universal ribosomal protein uS19 family.

Functionally, protein S19 forms a complex with S13 that binds strongly to the 16S ribosomal RNA. The polypeptide is Small ribosomal subunit protein uS19 (Pseudomonas paraeruginosa (strain DSM 24068 / PA7) (Pseudomonas aeruginosa (strain PA7))).